The sequence spans 298 residues: ATP phosphoribosyltransferase (298 aa).

Belongs to the ATP phosphoribosyltransferase family. Long subfamily. Requires Mg(2+) as cofactor.

Its subcellular location is the cytoplasm. It carries out the reaction 1-(5-phospho-beta-D-ribosyl)-ATP + diphosphate = 5-phospho-alpha-D-ribose 1-diphosphate + ATP. The protein operates within amino-acid biosynthesis; L-histidine biosynthesis; L-histidine from 5-phospho-alpha-D-ribose 1-diphosphate: step 1/9. Feedback inhibited by histidine. Catalyzes the condensation of ATP and 5-phosphoribose 1-diphosphate to form N'-(5'-phosphoribosyl)-ATP (PR-ATP). Has a crucial role in the pathway because the rate of histidine biosynthesis seems to be controlled primarily by regulation of HisG enzymatic activity. The polypeptide is ATP phosphoribosyltransferase (Aliivibrio salmonicida (strain LFI1238) (Vibrio salmonicida (strain LFI1238))).